We begin with the raw amino-acid sequence, 214 residues long: Pyrrolidone-carboxylate peptidase (214 aa).

Residues Glu79, Cys142, and His166 contribute to the active site.

This sequence belongs to the peptidase C15 family. As to quaternary structure, homotetramer.

The protein resides in the cytoplasm. The enzyme catalyses Release of an N-terminal pyroglutamyl group from a polypeptide, the second amino acid generally not being Pro.. Functionally, removes 5-oxoproline from various penultimate amino acid residues except L-proline. The polypeptide is Pyrrolidone-carboxylate peptidase (Fusobacterium nucleatum subsp. nucleatum (strain ATCC 25586 / DSM 15643 / BCRC 10681 / CIP 101130 / JCM 8532 / KCTC 2640 / LMG 13131 / VPI 4355)).